Here is a 98-residue protein sequence, read N- to C-terminus: HssA/B-like protein 36 (98 aa).

The interval 1-29 (MTLFSSISSISNPMTSSKSSISSFGSGTS) is disordered.

Belongs to the hssA/B family.

In Dictyostelium discoideum (Social amoeba), this protein is HssA/B-like protein 36 (hssl36).